A 98-amino-acid polypeptide reads, in one-letter code: HssA/B-like protein 50 (98 aa).

Disordered regions lie at residues 1–26 (MTLF…SFGS) and 68–98 (TRGS…CCGI). Over residues 84-98 (GHGGMGGGNGSCCGI) the composition is skewed to gly residues.

The protein belongs to the hssA/B family.

The protein is HssA/B-like protein 50 (hssl50) of Dictyostelium discoideum (Social amoeba).